The primary structure comprises 476 residues: Aspartyl/glutamyl-tRNA(Asn/Gln) amidotransferase subunit B (476 aa).

This sequence belongs to the GatB/GatE family. GatB subfamily. Heterotrimer of A, B and C subunits.

The enzyme catalyses L-glutamyl-tRNA(Gln) + L-glutamine + ATP + H2O = L-glutaminyl-tRNA(Gln) + L-glutamate + ADP + phosphate + H(+). The catalysed reaction is L-aspartyl-tRNA(Asn) + L-glutamine + ATP + H2O = L-asparaginyl-tRNA(Asn) + L-glutamate + ADP + phosphate + 2 H(+). Allows the formation of correctly charged Asn-tRNA(Asn) or Gln-tRNA(Gln) through the transamidation of misacylated Asp-tRNA(Asn) or Glu-tRNA(Gln) in organisms which lack either or both of asparaginyl-tRNA or glutaminyl-tRNA synthetases. The reaction takes place in the presence of glutamine and ATP through an activated phospho-Asp-tRNA(Asn) or phospho-Glu-tRNA(Gln). The sequence is that of Aspartyl/glutamyl-tRNA(Asn/Gln) amidotransferase subunit B from Listeria welshimeri serovar 6b (strain ATCC 35897 / DSM 20650 / CCUG 15529 / CIP 8149 / NCTC 11857 / SLCC 5334 / V8).